Consider the following 1041-residue polypeptide: Sarcoplasmic/endoplasmic reticulum calcium ATPase 2 (1041 aa).

Over 1–48 (MENAHTKTVEEVLAYFGVNESTGLSLEQVKKLKEKWGSNELPAEEGKT) the chain is Cytoplasmic. Residues 49–69 (LLELVIEQFEDLLVRILLLAA) traverse the membrane as a helical segment. The Lumenal portion of the chain corresponds to 70–89 (CISFVLAWFEEGEETITAFV). Residues 90 to 110 (EPFVILLILVANAIVGVWQER) form a helical membrane-spanning segment. At 111–253 (NAENAIEALK…QERTPLQQKL (143 aa)) the chain is on the cytoplasmic side. The helical transmembrane segment at 254 to 273 (DEFGEQLSKVISLICIAVWI) threads the bilayer. Topologically, residues 274-295 (INIGHFNDPVHGGSWIRGAIYY) are lumenal. The helical transmembrane segment at 296–313 (FKIAVALAVAAIPEGLPA) threads the bilayer. Ca(2+) is bound by residues Val-304, Ala-305, Ile-307, and Glu-309. Over 314 to 756 (VITTCLALGT…EEGRAIYNNM (443 aa)) the chain is Cytoplasmic. Catalysis depends on Asp-351, which acts as the 4-aspartylphosphate intermediate. Mg(2+) is bound by residues Asp-351 and Thr-353. Positions 353, 442, 489, 514, 559, 624, 625, 626, 677, and 683 each coordinate ATP. Mg(2+) is bound at residue Asp-702. Asn-705 serves as a coordination point for ATP. A helical transmembrane segment spans residues 757–776 (KQFIRYLISSNVGEVVCIFL). Positions 767 and 770 each coordinate Ca(2+). Residues 777 to 786 (TAALGFPEAL) lie on the Lumenal side of the membrane. Residues 787–807 (IPVQLLWVNLVTDGLPATALG) traverse the membrane as a helical segment. The tract at residues 787 to 807 (IPVQLLWVNLVTDGLPATALG) is interaction with PLN. Ca(2+)-binding residues include Asn-795, Thr-798, and Asp-799. The Cytoplasmic segment spans residues 808-827 (FNPPDLDIMNKPPRNPKEPL). A helical transmembrane segment spans residues 828–850 (ISGWLFFRYLAIGCYVGAATVGA). Topologically, residues 851-896 (AAWWFIAADGGPRVTFYQLSHFLQCKEDNPDFSGVDCVVFESPYPM) are lumenal. An intrachain disulfide couples Cys-875 to Cys-887. A helical transmembrane segment spans residues 897–916 (TMALSVLVTIEMCNALNSLS). Glu-907 lines the Ca(2+) pocket. At 917-929 (ENQSLMRMPPWEN) the chain is on the cytoplasmic side. Residues 930-948 (IWLVGAICLSMSLHFLILY) traverse the membrane as a helical segment. The interaction with PLN stretch occupies residues 931–942 (WLVGAICLSMSL). The Lumenal segment spans residues 949–963 (VEPLPIIFQITPLNV). A helical membrane pass occupies residues 964–984 (TQWLMVLKISLPVILLDETLK). Residues 985 to 1041 (YVARNYLEPGKDSVQPATKPCSLSACTEGVSWPFVFITLPLVIWLYSTDTNFSDMFW) are Cytoplasmic-facing.

This sequence belongs to the cation transport ATPase (P-type) (TC 3.A.3) family. Type IIA subfamily. In terms of assembly, interacts with sarcolipin (SLN). Interacts with phospholamban (PLN). Interacts with myoregulin (MRLN). Interacts with DWORF. Interacts with TMX2. Mg(2+) serves as cofactor. In terms of tissue distribution, only isoform 2 is detected in heart, while both isoforms are expressed in brain, with isoform 2 being predominant.

Its subcellular location is the endoplasmic reticulum membrane. It localises to the sarcoplasmic reticulum membrane. The enzyme catalyses Ca(2+)(in) + ATP + H2O = Ca(2+)(out) + ADP + phosphate + H(+). Reversibly inhibited by phospholamban (PLN) at low calcium concentrations. Inhibited by sarcolipin (SLN) and myoregulin (MRLN). Enhanced by DWORF; DWORF increases activity by displacing sarcolipin (SLN), phospholamban (PLN) and myoregulin (MRLN). In terms of biological role, this magnesium-dependent enzyme catalyzes the hydrolysis of ATP coupled with the translocation of calcium from the cytosol to the sarcoplasmic reticulum lumen. Isoform SERCA2A is involved in the regulation of the contraction/relaxation cycle. May act as a regulator of TNFSF11-mediated Ca(2+) signaling during osteoclastogenesis. In Gallus gallus (Chicken), this protein is Sarcoplasmic/endoplasmic reticulum calcium ATPase 2 (ATP2A2).